The chain runs to 273 residues: Large ribosomal subunit protein uL2 (273 aa).

Disordered stretches follow at residues 28-53 (KPFA…TTRH) and 221-273 (RGTA…RRSK). Positions 39–48 (KSGGRNNNGR) are enriched in low complexity.

The protein belongs to the universal ribosomal protein uL2 family. Part of the 50S ribosomal subunit. Forms a bridge to the 30S subunit in the 70S ribosome.

Its function is as follows. One of the primary rRNA binding proteins. Required for association of the 30S and 50S subunits to form the 70S ribosome, for tRNA binding and peptide bond formation. It has been suggested to have peptidyltransferase activity; this is somewhat controversial. Makes several contacts with the 16S rRNA in the 70S ribosome. The protein is Large ribosomal subunit protein uL2 of Enterobacter sp. (strain 638).